The chain runs to 622 residues: Glutamyl-tRNA(Gln) amidotransferase subunit B, mitochondrial (622 aa).

A mitochondrion-targeting transit peptide spans Met-1–His-54. The interval Lys-30 to Leu-67 is disordered. A compositionally biased stretch (low complexity) spans Thr-57 to Leu-67.

The protein belongs to the GatB/GatE family. GatB subfamily. As to quaternary structure, subunit of the heterotrimeric GatCAB amidotransferase (AdT) complex, composed of A, B and C subunits.

The protein resides in the mitochondrion. It carries out the reaction L-glutamyl-tRNA(Gln) + L-glutamine + ATP + H2O = L-glutaminyl-tRNA(Gln) + L-glutamate + ADP + phosphate + H(+). Its function is as follows. Allows the formation of correctly charged Gln-tRNA(Gln) through the transamidation of misacylated Glu-tRNA(Gln) in the mitochondria. The reaction takes place in the presence of glutamine and ATP through an activated gamma-phospho-Glu-tRNA(Gln). The sequence is that of Glutamyl-tRNA(Gln) amidotransferase subunit B, mitochondrial from Verticillium alfalfae (strain VaMs.102 / ATCC MYA-4576 / FGSC 10136) (Verticillium wilt of alfalfa).